The following is a 234-amino-acid chain: Endonuclease V (234 aa).

Mg(2+) contacts are provided by Asp36 and Asp104.

The protein belongs to the endonuclease V family. Requires Mg(2+) as cofactor.

The protein localises to the cytoplasm. It carries out the reaction Endonucleolytic cleavage at apurinic or apyrimidinic sites to products with a 5'-phosphate.. DNA repair enzyme involved in the repair of deaminated bases. Selectively cleaves double-stranded DNA at the second phosphodiester bond 3' to a deoxyinosine leaving behind the intact lesion on the nicked DNA. This chain is Endonuclease V, found in Yersinia pestis.